Here is a 563-residue protein sequence, read N- to C-terminus: PHD finger protein EHD3 (563 aa).

Residues methionine 1–lysine 46 form a disordered region. 3 consecutive PHD-type zinc fingers follow at residues leucine 296 to lysine 348, serine 420 to cysteine 472, and serine 474 to arginine 524.

As to quaternary structure, interacts with TRX1. As to expression, expressed in shoot apical meristem and leaves.

The protein localises to the nucleus. Probable transcription factor involved in the regulation of floral induction under long day (LD) conditions. Promotes photoperiodic flowering by repressing GHD7, a major floral repressor. Seems to function independently of HD1. This Oryza sativa subsp. japonica (Rice) protein is PHD finger protein EHD3.